Reading from the N-terminus, the 796-residue chain is Probable phosphoketolase (796 aa).

Belongs to the XFP family. The cofactor is thiamine diphosphate.

This is Probable phosphoketolase from Synechococcus elongatus (strain ATCC 33912 / PCC 7942 / FACHB-805) (Anacystis nidulans R2).